Here is a 607-residue protein sequence, read N- to C-terminus: Albumin (607 aa).

A signal peptide spans 1–18 (MKWVTFISLLLLFSSAYS). The propeptide occupies 19-24 (RGVFRR). Albumin domains follow at residues 19-209 (RGVF…DAMR), 210-402 (EKVL…KLKH), and 403-600 (LVDE…KLVA). Residue His27 coordinates Cu cation. Phosphoserine is present on Ser29. Ca(2+)-binding residues include Glu30 and Asp37. Cysteines 77 and 86 form a disulfide. 2 positions are modified to phosphoserine: Ser82 and Ser89. His91 is a binding site for Zn(2+). Disulfide bonds link Cys99-Cys115, Cys114-Cys125, Cys147-Cys192, Cys191-Cys200, Cys223-Cys269, and Cys268-Cys276. A Phosphothreonine modification is found at Thr107. Lys228 carries the post-translational modification N6-succinyllysine. A Ca(2+)-binding site is contributed by Glu267. 2 residues coordinate Zn(2+): His270 and Asp272. Ca(2+) is bound by residues Asp272, Glu275, Asp278, and Asp282. Cystine bridges form between Cys288–Cys302, Cys301–Cys312, Cys339–Cys384, Cys383–Cys392, Cys415–Cys461, Cys460–Cys471, Cys484–Cys500, and Cys499–Cys510. At Ser296 the chain carries Phosphoserine. Ser442 carries the post-translational modification Phosphoserine. Phosphothreonine occurs at positions 443 and 445. Lys459 is modified (N6-succinyllysine). Ser512 carries the post-translational modification Phosphoserine. 2 disulfide bridges follow: Cys537-Cys582 and Cys581-Cys590. Residue Lys557 is modified to N6-methyllysine. Thr569 carries the post-translational modification Phosphothreonine. At Lys587 the chain carries N6-succinyllysine.

This sequence belongs to the ALB/AFP/VDB family. In terms of assembly, interacts with FCGRT; this interaction regulates ALB homeostasis. Interacts with TASOR. In plasma, occurs in a covalently-linked complex with chromophore-bound alpha-1-microglobulin; this interaction does not prevent fatty acid binding to ALB. Post-translationally, phosphorylated by FAM20C in the extracellular medium. Plasma.

It localises to the secreted. In terms of biological role, binds water, Ca(2+), Na(+), K(+), fatty acids, hormones, bilirubin and drugs. Its main function is the regulation of the colloidal osmotic pressure of blood. Major zinc transporter in plasma, typically binds about 80% of all plasma zinc. Major calcium and magnesium transporter in plasma, binds approximately 45% of circulating calcium and magnesium in plasma. Potentially has more than two calcium-binding sites and might additionally bind calcium in a non-specific manner. The shared binding site between zinc and calcium at residue Asp-272 suggests a crosstalk between zinc and calcium transport in the blood. The rank order of affinity is zinc &gt; calcium &gt; magnesium. Binds to the bacterial siderophore enterobactin and inhibits enterobactin-mediated iron uptake of E.coli from ferric transferrin, and may thereby limit the utilization of iron and growth of enteric bacteria such as E.coli. Does not prevent iron uptake by the bacterial siderophore aerobactin. The sequence is that of Albumin (ALB) from Ovis aries (Sheep).